The sequence spans 227 residues: Cytochrome c oxidase subunit 2 (227 aa).

At 1–14 (MAYPFQLGLQDATS) the chain is on the mitochondrial intermembrane side. A helical transmembrane segment spans residues 15–45 (PIMEELLHFHDHTLMIVFLISSLVLYIITLM). Over 46–59 (LTTKLTHTSTMDAQ) the chain is Mitochondrial matrix. A helical membrane pass occupies residues 60–87 (EVETVWTILPAIILVLIALPSLRILYMM). Over 88-227 (DEINNPSLTV…YFETWSALMV (140 aa)) the chain is Mitochondrial intermembrane. Residues histidine 161, cysteine 196, glutamate 198, cysteine 200, histidine 204, and methionine 207 each coordinate Cu cation. Glutamate 198 contacts Mg(2+). Phosphotyrosine is present on tyrosine 218.

The protein belongs to the cytochrome c oxidase subunit 2 family. In terms of assembly, component of the cytochrome c oxidase (complex IV, CIV), a multisubunit enzyme composed of 14 subunits. The complex is composed of a catalytic core of 3 subunits MT-CO1, MT-CO2 and MT-CO3, encoded in the mitochondrial DNA, and 11 supernumerary subunits COX4I, COX5A, COX5B, COX6A, COX6B, COX6C, COX7A, COX7B, COX7C, COX8 and NDUFA4, which are encoded in the nuclear genome. The complex exists as a monomer or a dimer and forms supercomplexes (SCs) in the inner mitochondrial membrane with NADH-ubiquinone oxidoreductase (complex I, CI) and ubiquinol-cytochrome c oxidoreductase (cytochrome b-c1 complex, complex III, CIII), resulting in different assemblies (supercomplex SCI(1)III(2)IV(1) and megacomplex MCI(2)III(2)IV(2)). Found in a complex with TMEM177, COA6, COX18, COX20, SCO1 and SCO2. Interacts with TMEM177 in a COX20-dependent manner. Interacts with COX20. Interacts with COX16. It depends on Cu cation as a cofactor.

Its subcellular location is the mitochondrion inner membrane. It carries out the reaction 4 Fe(II)-[cytochrome c] + O2 + 8 H(+)(in) = 4 Fe(III)-[cytochrome c] + 2 H2O + 4 H(+)(out). Component of the cytochrome c oxidase, the last enzyme in the mitochondrial electron transport chain which drives oxidative phosphorylation. The respiratory chain contains 3 multisubunit complexes succinate dehydrogenase (complex II, CII), ubiquinol-cytochrome c oxidoreductase (cytochrome b-c1 complex, complex III, CIII) and cytochrome c oxidase (complex IV, CIV), that cooperate to transfer electrons derived from NADH and succinate to molecular oxygen, creating an electrochemical gradient over the inner membrane that drives transmembrane transport and the ATP synthase. Cytochrome c oxidase is the component of the respiratory chain that catalyzes the reduction of oxygen to water. Electrons originating from reduced cytochrome c in the intermembrane space (IMS) are transferred via the dinuclear copper A center (CU(A)) of subunit 2 and heme A of subunit 1 to the active site in subunit 1, a binuclear center (BNC) formed by heme A3 and copper B (CU(B)). The BNC reduces molecular oxygen to 2 water molecules using 4 electrons from cytochrome c in the IMS and 4 protons from the mitochondrial matrix. The polypeptide is Cytochrome c oxidase subunit 2 (MT-CO2) (Vulpes zerda (Fennec fox)).